The sequence spans 396 residues: Na(+)/H(+) antiporter NhaA (396 aa).

A run of 11 helical transmembrane segments spans residues 16-36 (GIIL…GLAG), 59-79 (LLLW…GLEV), 95-115 (TFPA…YAFF), 124-144 (AGWA…MALL), 154-174 (VFLL…IALF), 178-198 (QLSL…LWMN), 213-233 (LVLW…GVIV), 254-274 (ALHP…NAGV), 278-298 (GIGL…GLFI), 328-348 (IFAV…IASL), and 363-383 (LGIL…LRIA).

Belongs to the NhaA Na(+)/H(+) (TC 2.A.33) antiporter family.

The protein localises to the cell inner membrane. It carries out the reaction Na(+)(in) + 2 H(+)(out) = Na(+)(out) + 2 H(+)(in). Functionally, na(+)/H(+) antiporter that extrudes sodium in exchange for external protons. This chain is Na(+)/H(+) antiporter NhaA, found in Aeromonas hydrophila subsp. hydrophila (strain ATCC 7966 / DSM 30187 / BCRC 13018 / CCUG 14551 / JCM 1027 / KCTC 2358 / NCIMB 9240 / NCTC 8049).